The primary structure comprises 712 residues: Eukaryotic peptide chain release factor GTP-binding subunit (712 aa).

Polar residues predominate over residues 1 to 23 (MSNPQDQLSNDLANASISGDQSK). Disordered regions lie at residues 1 to 64 (MSNP…QYGG), 76 to 115 (GYQQNYNNRGGYQQNYNNRGGYQQNYNNRGGYQQQQQQQY), 132 to 162 (PQQQQQQQTQSQGMSLADFQKQKAEQQASLN), and 184 to 256 (TKKV…APVS). The segment at 16-143 (SISGDQSKQP…QQQQQQTQSQ (128 aa)) is several sort of repeats. 2 stretches are compositionally biased toward low complexity: residues 24 to 35 (QPQQQQPQQQQP) and 48 to 64 (TGGYQQFQPQQQQQYGG). Low complexity-rich tracts occupy residues 132–141 (PQQQQQQQTQ) and 190–201 (AKPAASKEASPA). The interval 144-282 (GMSLADFQKQ…DEVDEEVVKD (139 aa)) is charged. Over residues 202–217 (PKDEEASAEPEAKKES) the composition is skewed to basic and acidic residues. Residues 218–256 (TPVPASSSPAPAAADSTPAPVKKESTPTPSVASKSAPVS) show a composition bias toward low complexity. Residues 287 to 512 (KDHVSIIFMG…YLDNMDTMNR (226 aa)) enclose the tr-type G domain. Residues 296–303 (GHVDAGKS) are G1. Residue 296 to 303 (GHVDAGKS) participates in GTP binding. Positions 352 to 356 (GKTIE) are G2. At Thr370 the chain carries Phosphothreonine. A G3 region spans residues 373–376 (DAPG). Residues 373–377 (DAPGH) and 435–438 (NKMD) each bind GTP. Residues 435 to 438 (NKMD) form a G4 region. A G5 region spans residues 476–478 (SGY).

Belongs to the TRAFAC class translation factor GTPase superfamily. Classic translation factor GTPase family. ERF3 subfamily.

It localises to the cytoplasm. Its function is as follows. Involved in translation termination. Stimulates the activity of ERF1. Binds guanine nucleotides. The polypeptide is Eukaryotic peptide chain release factor GTP-binding subunit (SUP35) (Candida maltosa (Yeast)).